Here is a 281-residue protein sequence, read N- to C-terminus: Microtubule-associated protein RP/EB family member 3 (281 aa).

The Calponin-homology (CH) domain occupies 14–116 (NLSRHDMLAW…FIQWFKKFFD (103 aa)). Disordered regions lie at residues 157-181 (VPQR…VAPP) and 260-281 (EGFA…QDEY). Residues 158–175 (PQRTSPTGPKNMQTSGRL) are compositionally biased toward polar residues. Phosphoserine occurs at positions 162 and 176. The EB1 C-terminal domain maps to 194–264 (GGHEADAQIL…LYATEEGFAP (71 aa)). Residues 217–260 (DGLEKERDFYFSKLRDIELICQEHESENSPVISGIIGILYATEE) are APC-binding. Positions 217-281 (DGLEKERDFY…EHQQEDQDEY (65 aa)) are DCTN1-binding. Over residues 272 to 281 (EHQQEDQDEY) the composition is skewed to basic and acidic residues.

It belongs to the MAPRE family. Homodimer. Heterodimer with MAPRE1. Binds monomeric and polymerized GTP-bound tubulin. Interacts with DCTN1 and SRCIN1. Binds to the C-terminal domain of APC. Interacts (via C-terminus) with CLIP1. Interacts with SLAIN2. Interacts with SLAIN1. Interacts with APC2. Interacts with AKAP9. Interacts with PDE4DIP isoform 2/MMG8/SMYLE; this interaction is required for its recruitment to the Golgi apparatus.

It localises to the cytoplasm. It is found in the cytoskeleton. In terms of biological role, plus-end tracking protein (+TIP) that binds to the plus-end of microtubules and regulates the dynamics of the microtubule cytoskeleton. Promotes microtubule growth. May be involved in spindle function by stabilizing microtubules and anchoring them at centrosomes. Also acts as a regulator of minus-end microtubule organization: interacts with the complex formed by AKAP9 and PDE4DIP, leading to recruit CAMSAP2 to the Golgi apparatus, thereby tethering non-centrosomal minus-end microtubules to the Golgi, an important step for polarized cell movement. Promotes elongation of CAMSAP2-decorated microtubule stretches on the minus-end of microtubules. The sequence is that of Microtubule-associated protein RP/EB family member 3 (Mapre3) from Mus musculus (Mouse).